The following is a 1401-amino-acid chain: DNA-directed RNA polymerase subunit beta' (1401 aa).

Positions 70, 72, 85, and 88 each coordinate Zn(2+). 3 residues coordinate Mg(2+): Asp460, Asp462, and Asp464. Zn(2+)-binding residues include Cys808, Cys882, Cys889, and Cys892.

This sequence belongs to the RNA polymerase beta' chain family. As to quaternary structure, the RNAP catalytic core consists of 2 alpha, 1 beta, 1 beta' and 1 omega subunit. When a sigma factor is associated with the core the holoenzyme is formed, which can initiate transcription. Mg(2+) serves as cofactor. Requires Zn(2+) as cofactor.

It catalyses the reaction RNA(n) + a ribonucleoside 5'-triphosphate = RNA(n+1) + diphosphate. DNA-dependent RNA polymerase catalyzes the transcription of DNA into RNA using the four ribonucleoside triphosphates as substrates. The protein is DNA-directed RNA polymerase subunit beta' of Legionella pneumophila (strain Lens).